The chain runs to 436 residues: Probable transporter MCH1 (436 aa).

The next 7 membrane-spanning stretches (helical) occupy residues 27–47 (VVAF…LLFT), 66–86 (MISS…GYLA), 93–113 (LLSL…SYLV), 119–139 (SVIG…SLYF), 155–175 (LAIS…AQIL), 188–208 (LEVV…ASFV), and 249–269 (FVSF…ILNI). Residue Asn278 is glycosylated (N-linked (GlcNAc...) asparagine). 5 helical membrane-spanning segments follow: residues 295-312 (VSIM…LGVL), 325-345 (LLVV…SAIL), 347-367 (GVSY…IWGI), 373-393 (TWGS…MFYG), and 410-430 (TAGA…IWYA).

The protein belongs to the major facilitator superfamily.

The protein localises to the vacuole membrane. Functionally, probable transporter. This is Probable transporter MCH1 (MCH1) from Candida albicans (strain SC5314 / ATCC MYA-2876) (Yeast).